A 99-amino-acid polypeptide reads, in one-letter code: Integration host factor subunit beta (99 aa).

It belongs to the bacterial histone-like protein family. In terms of assembly, heterodimer of an alpha and a beta chain.

In terms of biological role, this protein is one of the two subunits of integration host factor, a specific DNA-binding protein that functions in genetic recombination as well as in transcriptional and translational control. This chain is Integration host factor subunit beta, found in Rhizobium etli (strain CIAT 652).